The chain runs to 344 residues: Dihydroorotate dehydrogenase (quinone) (344 aa).

Residues 65–69 (AGLDK) and threonine 89 each bind FMN. Residue lysine 69 coordinates substrate. 114–118 (NRLGF) contributes to the substrate binding site. The FMN site is built by asparagine 145 and asparagine 178. A substrate-binding site is contributed by asparagine 178. Serine 181 acts as the Nucleophile in catalysis. Asparagine 183 provides a ligand contact to substrate. FMN is bound by residues lysine 223 and threonine 251. 252–253 (NT) is a binding site for substrate. Residues glycine 274, glycine 303, and 324 to 325 (YT) contribute to the FMN site.

Belongs to the dihydroorotate dehydrogenase family. Type 2 subfamily. As to quaternary structure, monomer. Requires FMN as cofactor.

The protein localises to the cell membrane. It carries out the reaction (S)-dihydroorotate + a quinone = orotate + a quinol. Its pathway is pyrimidine metabolism; UMP biosynthesis via de novo pathway; orotate from (S)-dihydroorotate (quinone route): step 1/1. In terms of biological role, catalyzes the conversion of dihydroorotate to orotate with quinone as electron acceptor. The polypeptide is Dihydroorotate dehydrogenase (quinone) (Methylibium petroleiphilum (strain ATCC BAA-1232 / LMG 22953 / PM1)).